The chain runs to 338 residues: Glyceraldehyde-3-phosphate dehydrogenase (338 aa).

NAD(+)-binding positions include 12–13 (RI), Asp34, and Arg79. Residues 150 to 152 (SCT), Thr181, 210 to 211 (TG), and Arg233 contribute to the D-glyceraldehyde 3-phosphate site. Cys151 serves as the catalytic Nucleophile. Asn315 contacts NAD(+).

Belongs to the glyceraldehyde-3-phosphate dehydrogenase family. Homotetramer.

The protein localises to the cytoplasm. It catalyses the reaction D-glyceraldehyde 3-phosphate + phosphate + NAD(+) = (2R)-3-phospho-glyceroyl phosphate + NADH + H(+). The protein operates within carbohydrate degradation; glycolysis; pyruvate from D-glyceraldehyde 3-phosphate: step 1/5. This is Glyceraldehyde-3-phosphate dehydrogenase (gpd-1) from Neurospora crassa (strain ATCC 24698 / 74-OR23-1A / CBS 708.71 / DSM 1257 / FGSC 987).